Consider the following 100-residue polypeptide: NADH-quinone oxidoreductase subunit K (100 aa).

3 helical membrane passes run 2–22 (VPTT…MIGV), 29–49 (IMVF…LVAF), and 63–83 (FIVM…IVAI).

The protein belongs to the complex I subunit 4L family. In terms of assembly, NDH-1 is composed of 15 different subunits. Subunits NuoA, H, J, K, L, M, N constitute the membrane sector of the complex.

It is found in the cell membrane. It catalyses the reaction a quinone + NADH + 5 H(+)(in) = a quinol + NAD(+) + 4 H(+)(out). NDH-1 shuttles electrons from NADH, via FMN and iron-sulfur (Fe-S) centers, to quinones in the respiratory chain. The immediate electron acceptor for the enzyme in this species is believed to be a menaquinone. Couples the redox reaction to proton translocation (for every two electrons transferred, four hydrogen ions are translocated across the cytoplasmic membrane), and thus conserves the redox energy in a proton gradient. This is NADH-quinone oxidoreductase subunit K from Deinococcus deserti (strain DSM 17065 / CIP 109153 / LMG 22923 / VCD115).